The chain runs to 549 residues: NAC domain-containing protein 53 (549 aa).

The 151-residue stretch at 9-159 (LAPGFRFHPT…AFVLCRIFQK (151 aa)) folds into the NAC domain. The DNA-binding element occupies 108-165 (VGMKKTLVYHKGRAPRGERTNWVMHEYRLVDQDLDKTGVHQDAFVLCRIFQKSGSGPK). The span at 395–416 (LEKEETSRSKHVVEEKEKDEAS) shows a compositional bias: basic and acidic residues. Positions 395–418 (LEKEETSRSKHVVEEKEKDEASCS) are disordered. Residues 526-546 (LIFMCFWVLLLSVSFKVSILV) traverse the membrane as a helical segment.

As to expression, expressed in roots, rosette leaves, cauline leaves, shoot apex and stems.

The protein localises to the endoplasmic reticulum membrane. It is found in the nucleus. In terms of biological role, transcriptional activator activated by proteolytic cleavage through regulated intramembrane proteolysis (RIP). Promotes reactive oxygen species (ROS) production during drought-induced leaf senescence. In response to abscisic acid (ABA)-mediated drought stress signals, binds directly to the promoters of RBOHC and RBOHE genes, encoding ROS biosynthetic enzymes, resulting in ROS accumulation and triggering leaf senescence via programmed cell death (PCD). ROS-induced leaf senescence sustains plant survival under drought conditions. Involved in heat stress response. Modulates PCD through a ROS-mediated positive feedback control under heat stress conditions. This may provide an adaptation strategy for plant survival under extreme heat stress conditions. Acts as a repressor in preventing anther dehiscence during stamen development by suppressing genes that participate in jasmonic acid (JA) biosynthesis, such as DAD1, AOS, AOC3, OPR3 and 4CLL5/OPCL1. The protein is NAC domain-containing protein 53 of Arabidopsis thaliana (Mouse-ear cress).